Consider the following 699-residue polypeptide: Methylcrotonoyl-CoA carboxylase subunit alpha, mitochondrial (699 aa).

A Biotin carboxylation domain is found at 30-475 (ITKILIANRG…ETGFIPIHRE (446 aa)). ATP-binding residues include Lys144, Glu228, and His263. An ATP-grasp domain is found at 148-345 (KDIMIKAGVP…LVEWQLKVAE (198 aa)). Arg320 is an active-site residue. The 76-residue stretch at 624-699 (KGADGVLGSL…EDKKTLAVIV (76 aa)) folds into the Biotinyl-binding domain. At Lys665 the chain carries N6-biotinyllysine.

As to quaternary structure, probably a dodecamer composed of six biotin-containing alpha subunits and six beta subunits. Mn(2+) serves as cofactor. Requires biotin as cofactor.

The protein resides in the mitochondrion matrix. The catalysed reaction is 3-methylbut-2-enoyl-CoA + hydrogencarbonate + ATP = 3-methyl-(2E)-glutaconyl-CoA + ADP + phosphate + H(+). It functions in the pathway amino-acid degradation; L-leucine degradation; (S)-3-hydroxy-3-methylglutaryl-CoA from 3-isovaleryl-CoA: step 2/3. Biotin-attachment subunit of the 3-methylcrotonyl-CoA carboxylase, an enzyme that catalyzes the conversion of 3-methylcrotonyl-CoA to 3-methylglutaconyl-CoA, a critical step for leucine and isovaleric acid catabolism. The protein is Methylcrotonoyl-CoA carboxylase subunit alpha, mitochondrial (mccA) of Dictyostelium discoideum (Social amoeba).